Here is a 147-residue protein sequence, read N- to C-terminus: Hemoglobin subunit gamma (147 aa).

A Globin domain is found at Tyr3–His147. Heme b-binding residues include His64 and His93.

The protein belongs to the globin family. As to quaternary structure, heterotetramer of two alpha chains and two gamma chains in fetal hemoglobin (Hb F). Red blood cells.

In terms of biological role, gamma chains make up the fetal hemoglobin F, in combination with alpha chains. The sequence is that of Hemoglobin subunit gamma (HBG) from Dugong dugon (Dugong).